We begin with the raw amino-acid sequence, 61 residues long: ATP synthase F(0) complex subunit 8 (61 aa).

A helical membrane pass occupies residues Phe-10–Leu-32.

Belongs to the ATPase protein 8 family. In terms of assembly, component of the ATP synthase complex composed at least of ATP5F1A/subunit alpha, ATP5F1B/subunit beta, ATP5MC1/subunit c (homooctomer), MT-ATP6/subunit a, MT-ATP8/subunit 8, ATP5ME/subunit e, ATP5MF/subunit f, ATP5MG/subunit g, ATP5MK/subunit k, ATP5MJ/subunit j, ATP5F1C/subunit gamma, ATP5F1D/subunit delta, ATP5F1E/subunit epsilon, ATP5PF/subunit F6, ATP5PB/subunit b, ATP5PD/subunit d, ATP5PO/subunit OSCP. ATP synthase complex consists of a soluble F(1) head domain (subunits alpha(3) and beta(3)) - the catalytic core - and a membrane F(0) domain - the membrane proton channel (subunits c, a, 8, e, f, g, k and j). These two domains are linked by a central stalk (subunits gamma, delta, and epsilon) rotating inside the F1 region and a stationary peripheral stalk (subunits F6, b, d, and OSCP).

The protein localises to the mitochondrion membrane. In terms of biological role, subunit 8, of the mitochondrial membrane ATP synthase complex (F(1)F(0) ATP synthase or Complex V) that produces ATP from ADP in the presence of a proton gradient across the membrane which is generated by electron transport complexes of the respiratory chain. ATP synthase complex consist of a soluble F(1) head domain - the catalytic core - and a membrane F(1) domain - the membrane proton channel. These two domains are linked by a central stalk rotating inside the F(1) region and a stationary peripheral stalk. During catalysis, ATP synthesis in the catalytic domain of F(1) is coupled via a rotary mechanism of the central stalk subunits to proton translocation. In vivo, can only synthesize ATP although its ATP hydrolase activity can be activated artificially in vitro. Part of the complex F(0) domain. The sequence is that of ATP synthase F(0) complex subunit 8 from Chelonia mydas (Green sea-turtle).